A 303-amino-acid chain; its full sequence is Large ribosomal subunit protein uL18 (303 aa).

Belongs to the universal ribosomal protein uL18 family. In terms of assembly, component of the large ribosomal subunit (LSU).

The protein localises to the cytoplasm. Its subcellular location is the nucleus. Functionally, component of the ribosome, a large ribonucleoprotein complex responsible for the synthesis of proteins in the cell. The small ribosomal subunit (SSU) binds messenger RNAs (mRNAs) and translates the encoded message by selecting cognate aminoacyl-transfer RNA (tRNA) molecules. The large subunit (LSU) contains the ribosomal catalytic site termed the peptidyl transferase center (PTC), which catalyzes the formation of peptide bonds, thereby polymerizing the amino acids delivered by tRNAs into a polypeptide chain. The nascent polypeptides leave the ribosome through a tunnel in the LSU and interact with protein factors that function in enzymatic processing, targeting, and the membrane insertion of nascent chains at the exit of the ribosomal tunnel. The protein is Large ribosomal subunit protein uL18 (RPL5) of Oikopleura dioica (Tunicate).